We begin with the raw amino-acid sequence, 261 residues long: ATP synthase subunit a (261 aa).

The next 7 membrane-spanning stretches (helical) occupy residues I31–M51, W64–G84, L97–V117, L126–W146, I166–L188, V201–P223, and E235–N255.

The protein belongs to the ATPase A chain family. F-type ATPases have 2 components, CF(1) - the catalytic core - and CF(0) - the membrane proton channel. CF(1) has five subunits: alpha(3), beta(3), gamma(1), delta(1), epsilon(1). CF(0) has three main subunits: a(1), b(2) and c(9-12). The alpha and beta chains form an alternating ring which encloses part of the gamma chain. CF(1) is attached to CF(0) by a central stalk formed by the gamma and epsilon chains, while a peripheral stalk is formed by the delta and b chains.

The protein resides in the cell inner membrane. Its function is as follows. Key component of the proton channel; it plays a direct role in the translocation of protons across the membrane. The polypeptide is ATP synthase subunit a (Rhizorhabdus wittichii (strain DSM 6014 / CCUG 31198 / JCM 15750 / NBRC 105917 / EY 4224 / RW1) (Sphingomonas wittichii)).